A 330-amino-acid chain; its full sequence is Putative protein DDB_G0285185 (330 aa).

The disordered stretch occupies residues 212–240 (NKLQNQVQSSPKLSSPITKNKEQIVSTTS). A compositionally biased stretch (polar residues) spans 214 to 240 (LQNQVQSSPKLSSPITKNKEQIVSTTS).

In Dictyostelium discoideum (Social amoeba), this protein is Putative protein DDB_G0285185.